Consider the following 184-residue polypeptide: NADH-quinone oxidoreductase subunit B (184 aa).

4 residues coordinate [4Fe-4S] cluster: Cys37, Cys38, Cys103, and Cys132.

The protein belongs to the complex I 20 kDa subunit family. NDH-1 is composed of 14 different subunits. Subunits NuoB, C, D, E, F, and G constitute the peripheral sector of the complex. Requires [4Fe-4S] cluster as cofactor.

The protein resides in the cell membrane. It catalyses the reaction a quinone + NADH + 5 H(+)(in) = a quinol + NAD(+) + 4 H(+)(out). Functionally, NDH-1 shuttles electrons from NADH, via FMN and iron-sulfur (Fe-S) centers, to quinones in the respiratory chain. The immediate electron acceptor for the enzyme in this species is believed to be a menaquinone. Couples the redox reaction to proton translocation (for every two electrons transferred, four hydrogen ions are translocated across the cytoplasmic membrane), and thus conserves the redox energy in a proton gradient. The chain is NADH-quinone oxidoreductase subunit B from Nocardia farcinica (strain IFM 10152).